The primary structure comprises 1093 residues: Regulator of nonsense transcripts 1 homolog (1093 aa).

The interval 42–79 (YGVYGGRGPRGNGRRRHDDDDNETEVLDDDDDESLASV) is disordered. The segment covering 61–75 (DDNETEVLDDDDDES) has biased composition (acidic residues). One can recognise a Upf1 CH-rich domain in the interval 95–252 (EKELPPHACA…AKLEEMWKEA (158 aa)). Positions 103, 106, 117, 120, 125, 135, 139, 145, 163, 166, 189, and 193 each coordinate Zn(2+). A C3H region spans residues 103 to 135 (CAYCGIHSPSSVVKCLTCNKWFCSAKGSAFSSH). Residues 117–145 (CLTCNKWFCSAKGSAFSSHIVNHLVRARH) form a CC/SHH/C region. The tract at residues 163–193 (CYNCGTKNVFILGFIPAKSDTVVVLLCRQPC) is C4. Residues Q460, 480–484 (GTGKT), Q650, Y687, and E818 each bind ATP.

It belongs to the DNA2/NAM7 helicase family.

It is found in the cytoplasm. It carries out the reaction ATP + H2O = ADP + phosphate + H(+). Its function is as follows. RNA-dependent helicase required for nonsense-mediated decay (NMD) of aberrant mRNAs containing premature stop codons and modulates the expression level of normal mRNAs. Also capable of unwinding double-stranded DNA and translocating on single-stranded DNA. The sequence is that of Regulator of nonsense transcripts 1 homolog from Neurospora crassa (strain ATCC 24698 / 74-OR23-1A / CBS 708.71 / DSM 1257 / FGSC 987).